Reading from the N-terminus, the 369-residue chain is 2-aminoethylphosphonate--pyruvate transaminase (369 aa).

Lys193 is subject to N6-(pyridoxal phosphate)lysine.

Belongs to the class-V pyridoxal-phosphate-dependent aminotransferase family. PhnW subfamily. In terms of assembly, homodimer. The cofactor is pyridoxal 5'-phosphate.

The catalysed reaction is (2-aminoethyl)phosphonate + pyruvate = phosphonoacetaldehyde + L-alanine. Functionally, involved in phosphonate degradation. In Burkholderia pseudomallei (strain K96243), this protein is 2-aminoethylphosphonate--pyruvate transaminase.